Consider the following 481-residue polypeptide: MGKQEDAELVIIPFPFSGHILATIELAKRLISQDNPRIHTITILYWGLPFIPQADTIAFLRSLVKNEPRIRLVTLPEVQDPPPMELFVEFAESYILEYVKKMVPIIREALSTLLSSRDESGSVRVAGLVLDFFCVPMIDVGNEFNLPSYIFLTCSAGFLGMMKYLPERHREIKSEFNRSFNEELNLIPGYVNSVPTKVLPSGLFMKETYEPWVELAERFPEAKGILVNSYTALEPNGFKYFDRCPDNYPTIYPIGPILCSNDRPNLDSSERDRIITWLDDQPESSVVFLCFGSLKNLSATQINEIAQALEIVDCKFIWSFRTNPKEYASPYEALPHGFMDRVMDQGIVCGWAPQVEILAHKAVGGFVSHCGWNSILESLGFGVPIATWPMYAEQQLNAFTMVKELGLALEMRLDYVSEDGDIVKADEIAGTVRSLMDGVDVPKSKVKEIAEAGKEAVDGGSSFLAVKRFIGDLIDGVSISK.

His-19 (proton acceptor) is an active-site residue. Position 19 (His-19) interacts with an anthocyanidin. Asp-131 (charge relay) is an active-site residue. UDP-alpha-D-glucose contacts are provided by Thr-153, Ala-352, Gln-354, His-369, Trp-372, Asn-373, Ser-374, and Glu-377. Position 392 (Ala-392) interacts with an anthocyanidin. UDP-alpha-D-glucose is bound by residues Glu-393 and Gln-394.

The protein belongs to the UDP-glycosyltransferase family.

It catalyses the reaction a flavonol + UDP-alpha-D-glucose = a flavonol 3-O-beta-D-glucoside + UDP + H(+). It carries out the reaction a 7-O-hydroxy-flavonol + UDP-alpha-D-glucose = a flavonol 7-O-beta-D-glucoside + UDP + H(+). In terms of biological role, possesses quercetin 7-O-glucosyltransferase and 3'-O-glucosyltransferase activities in vitro. Also active in vitro on benzoates and benzoate derivatives. Glucosylates other secondary metabolites in vitro like trans-resveratrol, curcumin, vanillin and etoposide. The chain is Flavonol 3-O-glucosyltransferase UGT71C1 from Arabidopsis thaliana (Mouse-ear cress).